A 164-amino-acid chain; its full sequence is Large ribosomal subunit protein uL10 (164 aa).

The protein belongs to the universal ribosomal protein uL10 family. Part of the ribosomal stalk of the 50S ribosomal subunit. The N-terminus interacts with L11 and the large rRNA to form the base of the stalk. The C-terminus forms an elongated spine to which L12 dimers bind in a sequential fashion forming a multimeric L10(L12)X complex.

Forms part of the ribosomal stalk, playing a central role in the interaction of the ribosome with GTP-bound translation factors. The sequence is that of Large ribosomal subunit protein uL10 (rplJ) from Helicobacter pylori (strain J99 / ATCC 700824) (Campylobacter pylori J99).